We begin with the raw amino-acid sequence, 878 residues long: Longitudinals lacking protein, isoforms N/O/W/X/Y (878 aa).

A BTB domain is found at 32 to 97 (VDCTLAAEGK…MYRGEVNISQ (66 aa)). Disordered stretches follow at residues 115–200 (LSDN…SSVL), 228–340 (SSGP…ASAS), and 542–583 (QIVK…QTHA). Composition is skewed to low complexity over residues 162–175 (SGDVSGSREGSSSP), 228–251 (SSGPAAGTSSQASSTQQQQPLTST), 263–293 (TSSTAAPASGASASAAVQQAHLHQQQAQTTS), 329–340 (NSATGPNPASAS), and 546–569 (QQHQQQHQQQHQHPQQQHQPQQQQ). Residues 709-731 (YACNVCGKTYKIKGSLKRHKNYE) form a C2H2-type 1; degenerate zinc finger. The C2H2-type 2 zinc finger occupies 794–816 (FQCDFCLKWFKRRSHLNRHKKLH). Residues 826 to 863 (SKQKPKTTSGQNLSHDANTDDEVATTNPAATEDESNYP) are disordered. Residues 831–841 (KTTSGQNLSHD) are compositionally biased toward polar residues.

By stage 11, isoform W, isoform X and isoform Y are expressed throughout the mesoderm, whereas isoform O is expressed in both mesoderm and ectoderm. From stage 15, expression of isoform O expands to all tissues, whereas expression of isoform W, isoform X and isoform Y becomes restricted during later stages; starting from stage 14 to 16, isoform W, isoform X and isoform Y are expressed in muscle. From stages 14 and 15, isoform W and isoform Y are expressed in the gut. For some isoforms, expression is also seen in specific types of cells in the embryo; isoform O is expressed in the ventral furrow at stage 5 and in the dorsal epidermis from stage 7. Isoform Y shows prominent expression in the gonad starting at stage 15.

The protein localises to the nucleus. Its function is as follows. Putative transcription factor required for axon growth and guidance in the central and peripheral nervous systems. Repels CNS axons away from the midline by promoting the expression of the midline repellent sli and its receptor robo. The protein is Longitudinals lacking protein, isoforms N/O/W/X/Y of Drosophila melanogaster (Fruit fly).